The sequence spans 647 residues: Denticleless protein homolog (647 aa).

WD repeat units follow at residues 48–88, 95–134, 137–177, 209–248, 264–303, 308–349, and 353–393; these read AAAV…KQSS, AHDN…LLGT, GHQC…KDGF, DSQQ…TAYH, TRKL…TTPV, GHSN…QAPM, and GHSQ…EGEN. Short sequence motifs (DDB1-binding motif) lie at residues 167–170 and 238–241; these read WDTR and WDLR. Disordered stretches follow at residues 410–487 and 534–647; these read QSPN…SKSP and KRSR…RTQD. Composition is skewed to polar residues over residues 426–443 and 471–486; these read PSKN…SPQP and KMPS…SSKS. A compositionally biased stretch (basic and acidic residues) spans 543-558; it reads LKKEDSFGLESEKRLG. The span at 586–600 shows a compositional bias: low complexity; it reads KGSAQPKSPSSGSSQ.

The protein belongs to the WD repeat cdt2 family. As to quaternary structure, component of the DCX(DTL) E3 ubiquitin ligase complex, at least composed of cul4 (cul4a or cul4b), ddb1, dtl/cdt2 and rbx1.

The protein localises to the nucleus. Its subcellular location is the cytoplasm. The protein resides in the cytoskeleton. It is found in the microtubule organizing center. It localises to the centrosome. The protein localises to the chromosome. Its pathway is protein modification; protein ubiquitination. In terms of biological role, substrate-specific adapter of a DCX (DDB1-CUL4-X-box) E3 ubiquitin-protein ligase complex required for cell cycle control, DNA damage response and translesion DNA synthesis. The DCX(DTL) complex, also named CRL4(CDT2) complex, mediates the polyubiquitination and subsequent degradation of CDT1, CDKN1A/p21(CIP1), KMT5A and SDE2. CDT1 degradation in response to DNA damage is necessary to ensure proper cell cycle regulation of DNA replication. CDKN1A/p21(CIP1) degradation during S phase or following UV irradiation is essential to control replication licensing. KMT5A degradation is also important for a proper regulation of mechanisms such as TGF-beta signaling, cell cycle progression, DNA repair and cell migration. Most substrates require their interaction with PCNA for their polyubiquitination: substrates interact with PCNA via their PIP-box, and those containing the 'K+4' motif in the PIP box, recruit the DCX(DTL) complex, leading to their degradation. In undamaged proliferating cells, the DCX(DTL) complex also promotes the 'Lys-164' monoubiquitination of PCNA, thereby being involved in PCNA-dependent translesion DNA synthesis. May play a role in the regulation of the circadian clock. This Danio rerio (Zebrafish) protein is Denticleless protein homolog (dtl).